The sequence spans 388 residues: Succinate--CoA ligase [ADP-forming] subunit beta (388 aa).

The region spanning 9 to 244 (KEILRKYNVP…LDEEDANEIE (236 aa)) is the ATP-grasp domain. ATP contacts are provided by residues lysine 46, 53–55 (GRG), glutamate 99, alanine 102, and glutamate 107. The Mg(2+) site is built by asparagine 199 and aspartate 213. Residues asparagine 264 and 321–323 (GIM) each bind substrate.

This sequence belongs to the succinate/malate CoA ligase beta subunit family. As to quaternary structure, heterotetramer of two alpha and two beta subunits. Mg(2+) serves as cofactor.

The catalysed reaction is succinate + ATP + CoA = succinyl-CoA + ADP + phosphate. It carries out the reaction GTP + succinate + CoA = succinyl-CoA + GDP + phosphate. It functions in the pathway carbohydrate metabolism; tricarboxylic acid cycle; succinate from succinyl-CoA (ligase route): step 1/1. Succinyl-CoA synthetase functions in the citric acid cycle (TCA), coupling the hydrolysis of succinyl-CoA to the synthesis of either ATP or GTP and thus represents the only step of substrate-level phosphorylation in the TCA. The beta subunit provides nucleotide specificity of the enzyme and binds the substrate succinate, while the binding sites for coenzyme A and phosphate are found in the alpha subunit. The protein is Succinate--CoA ligase [ADP-forming] subunit beta of Cupriavidus taiwanensis (strain DSM 17343 / BCRC 17206 / CCUG 44338 / CIP 107171 / LMG 19424 / R1) (Ralstonia taiwanensis (strain LMG 19424)).